Reading from the N-terminus, the 455-residue chain is MDTAGPPAPAGTEGDGPGGSTGETSRRLSKEQIFVLVSAASMNLGCMMTYSILGPFFPKEAEKKGASNTTIGMIFGCYALFELLASLVFGKYLVHIGAKFMFIAGMFVSGGVTILFGVLDQLPEGPIFIAMCFLVRIVDAIGFGAAITASSSILAKAFPNNVATVMGSLEVFSGLGLVAGPPLGGLLYQSFGYEVPFIFLGCIVLLMIPLNLCILPSYESDAGKQSFWKLVTLPKIGLIAFVIISLSSCFGFLDPTLSLFVMKKFSLSTGYVGLVFLGLSLSYAISSPLFGLLSDKMPNLRKWFLVFGNLITAGCYMLLGPIPLLHIKSQLWLLVLVLVINGVSAGMSIIPTFPEMLSCAYANGFEDGISTLGLVSGLFGAMWSVGAFMGPILGGFLCEKIGFEWAAAIQGLWTLLSGVAMALFYLWEDSTMRRSKAQNILGTEEEQAALLPNDT.

N-acetylmethionine is present on M1. A disordered region spans residues M1–R26. Topologically, residues M1–Q32 are cytoplasmic. S20 bears the Phosphoserine mark. Residues I33–L53 traverse the membrane as a helical segment. At G54–T69 the chain is on the extracellular side. Residues T70–G90 form a helical membrane-spanning segment. Residues K91–K99 are Cytoplasmic-facing. The helical transmembrane segment at F100 to D120 threads the bilayer. Residues Q121–P126 lie on the Extracellular side of the membrane. Residues I127–I147 traverse the membrane as a helical segment. The Cytoplasmic portion of the chain corresponds to T148–M166. Residues G167–L187 form a helical membrane-spanning segment. Topologically, residues Y188–E194 are extracellular. A helical membrane pass occupies residues V195–L215. Residues P216–T232 are Cytoplasmic-facing. The helical transmembrane segment at L233–L253 threads the bilayer. Residues D254 to Y271 are Extracellular-facing. Residues V272–L292 form a helical membrane-spanning segment. Topologically, residues L293–W303 are cytoplasmic. A helical transmembrane segment spans residues F304–L324. Topologically, residues L325–Q330 are extracellular. Residues L331–P351 form a helical membrane-spanning segment. Residues T352–S376 lie on the Cytoplasmic side of the membrane. The helical transmembrane segment at G377–L397 threads the bilayer. Over C398–A406 the chain is Extracellular. Residues A407 to W427 traverse the membrane as a helical segment. At E428 to T455 the chain is on the cytoplasmic side.

In terms of tissue distribution, expressed in brain structures, particularly in hippocampus, cortex, and cerebellum (at protein level). Expressed in astrocytes and hippocampal neurons (at protein level). Expressed in peritoneal mast cells.

The protein localises to the cytoplasmic vesicle. It localises to the secretory vesicle membrane. It is found in the secretory vesicle. The protein resides in the synaptic vesicle membrane. The enzyme catalyses spermine(in) + n H(+)(out) = spermine(out) + n H(+)(in). It carries out the reaction spermidine(in) + n H(+)(out) = spermidine(out) + n H(+)(in). The catalysed reaction is serotonin(in) + n H(+)(out) = serotonin(out) + n H(+)(in). Proton-coupled polyamine antiporter involved in the translocation of polyamines from cytosol into secretory vesicles prior to their release via exocytosis. Uses the electrochemical proton gradient generated by a V-type proton-pumping ATPase to couple the efflux of protons with the uptake of a polyamine molecule. Facilitates vesicular storage of spermine and spermidine in astrocytes with an impact on glutamatergic neuronal transmission and memory formation. Upon antigen stimulation, regulates polyamine accumulation and release in mast cell secretory granules, which in turn potentiates mast cell degranulation and histamine secretion. This chain is MFS-type transporter SLC18B1, found in Rattus norvegicus (Rat).